The sequence spans 189 residues: Flavin prenyltransferase UbiX (189 aa).

FMN is bound by residues G11 to S13, S37, S88 to T91, and R123. Y153 lines the dimethylallyl phosphate pocket.

The protein belongs to the UbiX/PAD1 family.

It catalyses the reaction dimethylallyl phosphate + FMNH2 = prenylated FMNH2 + phosphate. Functionally, flavin prenyltransferase that catalyzes the synthesis of the prenylated FMN cofactor (prenyl-FMN) for 4-hydroxy-3-polyprenylbenzoic acid decarboxylase UbiD. The prenyltransferase is metal-independent and links a dimethylallyl moiety from dimethylallyl monophosphate (DMAP) to the flavin N5 and C6 atoms of FMN. This Neisseria meningitidis serogroup B (strain ATCC BAA-335 / MC58) protein is Flavin prenyltransferase UbiX.